The chain runs to 378 residues: T-cell immunoglobulin and mucin domain-containing protein 4 (378 aa).

A signal peptide spans 1–24 (MSKEPLILWLMIEFWWLYLTPVTS). Positions 25–126 (ETVVTEVLGH…PGWFNDVKIN (102 aa)) constitute an Ig-like V-type domain. Topologically, residues 25-314 (ETVVTEVLGH…SMKNEMPISQ (290 aa)) are extracellular. 3 disulfide bridges follow: Cys40-Cys112, Cys53-Cys64, and Cys59-Cys111. 2 disordered regions span residues 136 to 160 (TTTH…TRQM) and 269 to 304 (WKTS…GIPM). Positions 269 to 297 (WKTSDSVSSPQPGASDTAVPEQNKTTKTG) are enriched in polar residues. Asn291 carries N-linked (GlcNAc...) asparagine glycosylation. A helical transmembrane segment spans residues 315–335 (LLMIIAPSLGFVLFALFVAFL). Residues 336-378 (LRGKLMETYCSQKHTRLDYIGDSKNVLNDVQHGREDEDGLFTL) lie on the Cytoplasmic side of the membrane. Ser358 bears the Phosphoserine mark.

The protein belongs to the immunoglobulin superfamily. TIM family. Interacts with MERTK; this interaction enhances TIMD4-mediated efferocytosis. Interacts with EPHA2.

It is found in the cell membrane. The protein resides in the secreted. Its subcellular location is the extracellular exosome. Phosphatidylserine receptor that plays different role in immune response including phagocytosis of apoptotic cells and T-cell regulation. Controls T-cell activation in a bimodal fashion, decreasing the activation of naive T-cells by inducing cell cycle arrest, while increasing proliferation of activated T-cells by activating AKT1 and ERK1/2 phosphorylations and subsequent signaling pathways. Also plays a role in efferocytosis which is the process by which apoptotic cells are removed by phagocytic cells. Mechanistically, promotes the engulfment of apoptotic cells or exogenous particles by securing them to phagocytes through direct binding to phosphatidylserine present on apoptotic cells, while other engulfment receptors such as MERTK efficiently recognize apoptotic cells and mediate their ingestion. Additionally, promotes autophagy process by suppressing NLRP3 inflammasome activity via activation of LKB1/PRKAA1 pathway in a phosphatidylserine-dependent mechanism. In terms of biological role, (Microbial infection) Plays a positive role in exosome-mediated trafficking of HIV-1 virus and its entry into immune cells. The protein is T-cell immunoglobulin and mucin domain-containing protein 4 (TIMD4) of Homo sapiens (Human).